A 232-amino-acid chain; its full sequence is Enolase-phosphatase E1 (232 aa).

This sequence belongs to the HAD-like hydrolase superfamily. MasA/MtnC family. As to quaternary structure, monomer. It depends on Mg(2+) as a cofactor.

The enzyme catalyses 5-methylsulfanyl-2,3-dioxopentyl phosphate + H2O = 1,2-dihydroxy-5-(methylsulfanyl)pent-1-en-3-one + phosphate. Its pathway is amino-acid biosynthesis; L-methionine biosynthesis via salvage pathway; L-methionine from S-methyl-5-thio-alpha-D-ribose 1-phosphate: step 3/6. The protein operates within amino-acid biosynthesis; L-methionine biosynthesis via salvage pathway; L-methionine from S-methyl-5-thio-alpha-D-ribose 1-phosphate: step 4/6. Bifunctional enzyme that catalyzes the enolization of 2,3-diketo-5-methylthiopentyl-1-phosphate (DK-MTP-1-P) into the intermediate 2-hydroxy-3-keto-5-methylthiopentenyl-1-phosphate (HK-MTPenyl-1-P), which is then dephosphorylated to form the acireductone 1,2-dihydroxy-3-keto-5-methylthiopentene (DHK-MTPene). This Nocardia farcinica (strain IFM 10152) protein is Enolase-phosphatase E1.